The sequence spans 119 residues: Large ribosomal subunit protein bL20 (119 aa).

Belongs to the bacterial ribosomal protein bL20 family.

Functionally, binds directly to 23S ribosomal RNA and is necessary for the in vitro assembly process of the 50S ribosomal subunit. It is not involved in the protein synthesizing functions of that subunit. The polypeptide is Large ribosomal subunit protein bL20 (Rhodopseudomonas palustris (strain BisB5)).